We begin with the raw amino-acid sequence, 227 residues long: 2,3-bisphosphoglycerate-dependent phosphoglycerate mutase (227 aa).

Residues 8-15 (RHGKSVWN), 21-22 (TG), arginine 58, 110-113 (ERMY), lysine 121, 137-138 (RR), and 181-182 (GN) contribute to the substrate site. Histidine 9 serves as the catalytic Tele-phosphohistidine intermediate. Glutamate 110 functions as the Proton donor/acceptor in the catalytic mechanism.

This sequence belongs to the phosphoglycerate mutase family. BPG-dependent PGAM subfamily.

The enzyme catalyses (2R)-2-phosphoglycerate = (2R)-3-phosphoglycerate. It participates in carbohydrate degradation; glycolysis; pyruvate from D-glyceraldehyde 3-phosphate: step 3/5. In terms of biological role, catalyzes the interconversion of 2-phosphoglycerate and 3-phosphoglycerate. This Chlamydia felis (strain Fe/C-56) (Chlamydophila felis) protein is 2,3-bisphosphoglycerate-dependent phosphoglycerate mutase.